Here is a 203-residue protein sequence, read N- to C-terminus: Outer-membrane lipoprotein LolB (203 aa).

The signal sequence occupies residues 1-18 (MYRLLCLLALLTAAGLMG). A lipid anchor (N-palmitoyl cysteine) is attached at Cys-19. Residue Cys-19 is the site of S-diacylglycerol cysteine attachment.

It belongs to the LolB family. As to quaternary structure, monomer.

It is found in the cell outer membrane. Its function is as follows. Plays a critical role in the incorporation of lipoproteins in the outer membrane after they are released by the LolA protein. The sequence is that of Outer-membrane lipoprotein LolB from Cellvibrio japonicus (strain Ueda107) (Pseudomonas fluorescens subsp. cellulosa).